We begin with the raw amino-acid sequence, 620 residues long: Glutathione-regulated potassium-efflux system protein KefC (620 aa).

Helical transmembrane passes span 4-24 (HTLL…PIAV), 26-46 (LGLG…PWGL), 54-74 (SILH…GLEL), 90-110 (GALQ…FLGL), 114-134 (VAEL…MQAM), 149-169 (FAVL…IPLL), 178-198 (LGAF…VVLL), 218-238 (VFSA…EEVG), 270-290 (GLLL…GTLV), 294-314 (LRIL…LWLV), 327-347 (WFAV…GAAQ), and 359-379 (ALTL…MLLT). The RCK N-terminal domain occupies 399–518 (QPRVIVAGFG…AGVAMPERET (120 aa)). The tract at residues 599–620 (QGTAEGKHSGEAADEPEVKPSI) is disordered.

This sequence belongs to the monovalent cation:proton antiporter 2 (CPA2) transporter (TC 2.A.37) family. KefC subfamily. As to quaternary structure, homodimer. Interacts with the regulatory subunit KefF.

It localises to the cell inner membrane. Functionally, pore-forming subunit of a potassium efflux system that confers protection against electrophiles. Catalyzes K(+)/H(+) antiport. The polypeptide is Glutathione-regulated potassium-efflux system protein KefC (Salmonella heidelberg (strain SL476)).